The sequence spans 202 residues: Arenicin-2 (202 aa).

The signal sequence occupies residues 1–25; the sequence is MTSTQSVAVYATLILAIFCFNDIHC. A propeptide spanning residues 26–181 is cleaved from the precursor; the sequence is DPIAEARAAA…SGDNNEPEKR (156 aa). Residues 73-168 enclose the BRICHOS domain; the sequence is GDGVEGSVMV…ACQGKSVYWL (96 aa). Disulfide bonds link Cys100–Cys160 and Cys184–Cys201.

Has antimicrobial activity against the Gram-negative bacteria E.coli and P.mirabilis, the Gram-positive bacterium L.monocytogenes and the yeast C.albicans. This is Arenicin-2 from Arenicola marina (Lugworm).